The chain runs to 440 residues: Chromosome partition protein MukF (440 aa).

The leucine-zipper stretch occupies residues 208 to 236 (LDETSGNLRELQDTLNAAGDKLQSQLLRI).

The protein belongs to the MukF family. Interacts, and probably forms a ternary complex, with MukE and MukB via its C-terminal region. The complex formation is stimulated by calcium or magnesium. It is required for an interaction between MukE and MukB.

It is found in the cytoplasm. The protein resides in the nucleoid. Its function is as follows. Involved in chromosome condensation, segregation and cell cycle progression. May participate in facilitating chromosome segregation by condensation DNA from both sides of a centrally located replisome during cell division. Not required for mini-F plasmid partitioning. Probably acts via its interaction with MukB and MukE. Overexpression results in anucleate cells. It has a calcium binding activity. The protein is Chromosome partition protein MukF of Histophilus somni (strain 2336) (Haemophilus somnus).